The following is an 801-amino-acid chain: Na(+)/H(+) antiporter subunit A1 (801 aa).

21 helical membrane passes run 4–25 (LHIA…YRFF), 30–49 (LGWF…LTLI), 79–101 (LGLL…SIGY), 108–127 (LGNF…GVVL), 131–153 (VIIL…SFWR), 166–188 (LIIT…IPTQ), 208–230 (FIFA…PFYI), 243–265 (SAYL…MTPI), 270–289 (QGWV…WASL), 302–324 (AFST…ISYH), 339–361 (AAIF…TGAV), 373–395 (LGGL…LSMA), 429–451 (YLFP…KFIM), 472–494 (ILML…FPGI), 526–548 (AFLS…SYWV), 589–611 (NNLV…SVPF), 621–641 (IRIF…LILF), 646–668 (LFSI…FFKA), 672–694 (ALTQ…YHLP), 707–729 (LTNA…IAYG), and 767–784 (LFES…YTMI).

This sequence belongs to the CPA3 antiporters (TC 2.A.63) subunit A family. As to quaternary structure, may form a heterooligomeric complex that consists of seven subunits: mnhA1, mnhB1, mnhC1, mnhD1, mnhE1, mnhF1 and mnhG1.

The protein localises to the cell membrane. Its activity is regulated as follows. Na(+) extrusion is completely inhibited by the H(+) conductor carbonyl cyanide m-chlorophenylhydrazone (CCCP). Its function is as follows. Mnh complex is a Na(+)Li(+)/H(+) antiporter involved in Na(+) and/or Li(+) excretion. Na(+)/H(+) antiport consumes a transmembrane electrical potential, and is thus inferred to be electrogenic. Does not transport K(+), Ca(2+) or Mg(2+). The chain is Na(+)/H(+) antiporter subunit A1 (mnhA1) from Staphylococcus aureus.